A 313-amino-acid chain; its full sequence is Intelectin-1a (313 aa).

An N-terminal signal peptide occupies residues 1-18; that stretch reads MTQLGFLLFIMVATRGCS. A Fibrinogen C-terminal domain is found at 32–251; the sequence is SFFSSLPRSC…NNERAASALC (220 aa). Residues C41 and C70 are joined by a disulfide bond. Residues H86, E87, N89, G92, G97, D98, and D133 each contribute to the Ca(2+) site. 3 disulfides stabilise this stretch: C94–C280, C199–C259, and C251–C265. Ca(2+) contacts are provided by N260, E262, E274, and D282. Residues 262-263 and E274 contribute to the a carbohydrate site; that span reads EH. The GPI-anchor amidated serine moiety is linked to residue S298. Residues 299–313 constitute a propeptide that is removed on maturation; that stretch reads SSRKITEAAVLLFYR.

As to quaternary structure, monomer. May interact with LTF. In terms of tissue distribution, expressed in small intestinal Paneth cells in uninfected mice. Expression also detected in various other tissues including stomach, kidney, ovary and brain.

The protein localises to the cell membrane. It localises to the secreted. Its function is as follows. Lectin that specifically recognizes microbial carbohydrate chains in a calcium-dependent manner. Binds to microbial glycans that contain a terminal acyclic 1,2-diol moiety, including beta-linked D-galactofuranose (beta-Galf), D-phosphoglycerol-modified glycans, D-glycero-D-talo-oct-2-ulosonic acid (KO) and 3-deoxy-D-manno-oct-2-ulosonic acid (KDO). Binds to glycans from Gram-positive and Gram-negative bacteria, including K.pneumoniae, S.pneumoniae, Y.pestis, P.mirabilis and P.vulgaris. Does not bind mammalian glycans. Probably plays a role in the defense system against microorganisms. May function as adipokine that has no effect on basal glucose uptake but enhances insulin-stimulated glucose uptake in adipocytes. Increases AKT phosphorylation in the absence and presence of insulin. May interact with lactoferrin/LTF and increase its uptake, and may thereby play a role in iron absorption. The chain is Intelectin-1a (Itln1) from Mus musculus (Mouse).